The primary structure comprises 298 residues: Homoserine kinase (298 aa).

83 to 93 lines the ATP pocket; that stretch reads PISRGLGSSSS.

The protein belongs to the GHMP kinase family. Homoserine kinase subfamily.

It is found in the cytoplasm. It carries out the reaction L-homoserine + ATP = O-phospho-L-homoserine + ADP + H(+). It functions in the pathway amino-acid biosynthesis; L-threonine biosynthesis; L-threonine from L-aspartate: step 4/5. Functionally, catalyzes the ATP-dependent phosphorylation of L-homoserine to L-homoserine phosphate. The sequence is that of Homoserine kinase from Clostridium botulinum (strain Eklund 17B / Type B).